The following is a 157-amino-acid chain: MGFPKVERLLINYKTLDEFKKFKGCGAQELSMLEELQANIIENDSESPFYGIYYGGSLIARMSLYMKRNGGEPFEITGTYLELYKLEVLPNFQKQGFGEMLVNYAKGLQFPIKTIARIHSAGFWDKLNFQPVSVPDGDFYVWHPETNLNTVTNEESA.

One can recognise an N-acetyltransferase domain in the interval 9 to 146 (LLINYKTLDE…GDFYVWHPET (138 aa)).

This is an uncharacterized protein from Bacillus cereus (strain ZK / E33L).